The chain runs to 159 residues: Small ribosomal subunit protein bS6 (159 aa).

The span at 93–151 (VDEHEEGPSAMMRKADRDRERDDRGPREGGFRGDREGRGDREGGGFRGDRGPRRPREDA) shows a compositional bias: basic and acidic residues. Residues 93-159 (VDEHEEGPSA…DADTAAASEE (67 aa)) form a disordered region.

The protein belongs to the bacterial ribosomal protein bS6 family.

In terms of biological role, binds together with bS18 to 16S ribosomal RNA. In Rhodopseudomonas palustris (strain HaA2), this protein is Small ribosomal subunit protein bS6.